A 449-amino-acid polypeptide reads, in one-letter code: Tubulin alpha-1C chain (449 aa).

Positions 1–4 match the MREC motif motif; sequence MREC. Q11 is a GTP binding site. K40 is subject to N6-acetyllysine. Residues E71, S140, G144, T145, T179, N206, and N228 each contribute to the GTP site. Residue E71 coordinates Mg(2+). E254 is an active-site residue. A 3'-nitrotyrosine modification is found at Y282. Y432 bears the Phosphotyrosine mark. Phosphoserine is present on S439. A 3'-nitrotyrosine modification is found at Y449.

Belongs to the tubulin family. As to quaternary structure, dimer of alpha and beta chains. A typical microtubule is a hollow water-filled tube with an outer diameter of 25 nm and an inner diameter of 15 nM. Alpha-beta heterodimers associate head-to-tail to form protofilaments running lengthwise along the microtubule wall with the beta-tubulin subunit facing the microtubule plus end conferring a structural polarity. Microtubules usually have 13 protofilaments but different protofilament numbers can be found in some organisms and specialized cells. Mg(2+) is required as a cofactor. Some glutamate residues at the C-terminus are polyglycylated, resulting in polyglycine chains on the gamma-carboxyl group. Glycylation is mainly limited to tubulin incorporated into axonemes (cilia and flagella) whereas glutamylation is prevalent in neuronal cells, centrioles, axonemes, and the mitotic spindle. Both modifications can coexist on the same protein on adjacent residues, and lowering polyglycylation levels increases polyglutamylation, and reciprocally. Cilia and flagella glycylation is required for their stability and maintenance. Flagella glycylation controls sperm motility. In terms of processing, some glutamate residues at the C-terminus are polyglutamylated, resulting in polyglutamate chains on the gamma-carboxyl group. Polyglutamylation plays a key role in microtubule severing by spastin (SPAST). SPAST preferentially recognizes and acts on microtubules decorated with short polyglutamate tails: severing activity by SPAST increases as the number of glutamates per tubulin rises from one to eight, but decreases beyond this glutamylation threshold. Glutamylation is also involved in cilia motility. Post-translationally, acetylation of alpha chains at Lys-40 is located inside the microtubule lumen. This modification has been correlated with increased microtubule stability, intracellular transport and ciliary assembly. Methylation of alpha chains at Lys-40 is found in mitotic microtubules and is required for normal mitosis and cytokinesis contributing to genomic stability. In terms of processing, nitration of Tyr-449 is irreversible and interferes with normal dynein intracellular distribution. Post-translationally, undergoes a tyrosination/detyrosination cycle, the cyclic removal and re-addition of a C-terminal tyrosine residue by the enzymes tubulin tyrosine carboxypeptidase (MATCAP1, VASH1 or VASH2) and tubulin tyrosine ligase (TTL), respectively. Tyrosination promotes microtubule interaction with CAP-Gly domain-containing proteins such as CLIP1, CLIP2 and DCTN1. Tyrosination regulates the initiation of dynein-dynactin motility via interaction with DCTN1, which brings the dynein-dynactin complex into contact with microtubules. In neurons, tyrosinated tubulins mediate the initiation of retrograde vesicle transport. In terms of processing, detyrosination is involved in metaphase plate congression by guiding chromosomes during mitosis: detyrosination promotes interaction with CENPE, promoting pole-proximal transport of chromosomes toward the equator. Detyrosination increases microtubules-dependent mechanotransduction in dystrophic cardiac and skeletal muscle. In cardiomyocytes, detyrosinated microtubules are required to resist to contractile compression during contraction: detyrosination promotes association with desmin (DES) at force-generating sarcomeres, leading to buckled microtubules and mechanical resistance to contraction.

The protein localises to the cytoplasm. Its subcellular location is the cytoskeleton. It catalyses the reaction GTP + H2O = GDP + phosphate + H(+). Its function is as follows. Tubulin is the major constituent of microtubules, a cylinder consisting of laterally associated linear protofilaments composed of alpha- and beta-tubulin heterodimers. Microtubules grow by the addition of GTP-tubulin dimers to the microtubule end, where a stabilizing cap forms. Below the cap, tubulin dimers are in GDP-bound state, owing to GTPase activity of alpha-tubulin. The polypeptide is Tubulin alpha-1C chain (Tuba1c) (Rattus norvegicus (Rat)).